Reading from the N-terminus, the 256-residue chain is Matrix protein (256 aa).

The interval 1 to 110 is interaction with M2-1; that stretch reads METYVNKLHE…KLAYDVTTPC (110 aa). The interval 110–183 is nuclear targeting and binding to host importin KPNB1; that stretch reads CEIKACSLTC…LNTLENITTT (74 aa). Positions 194 to 206 match the Nuclear export signal motif; that stretch reads IIPYSGLLLVITV. Threonine 205 is subject to Phosphothreonine.

This sequence belongs to the pneumovirinae M protein family. In terms of assembly, forms dimers. Forms higher-order oligomers. Interacts with glycoprotein G (via N-terminus). Interacts with protein M2-1; this interaction directs the matrix protein localization to cytoplasmic inclusions comprising viral proteins L, N, P, and M2-1 and mediates the matrix protein association with the nucleocapsid. Interacts with host importin KPNB1; this interaction mediates nuclear import of the matrix protein early during infection. Interacts with host AP3M1; this interaction plays an essential role in trafficking the matrix protein in host cells. Interacts with host CAV1; this interaction probably facilitates viral budding. Interacts with host CFL1; this interaction probably facilitates viral replication. Interacts with host ZNF502; this interaction probably facilitates viral release. Interacts with host RACK1. Post-translationally, phosphorylation is important for oligomerization.

The protein resides in the virion. The protein localises to the host cytoplasm. It is found in the host nucleus. Its subcellular location is the host cell membrane. In terms of biological role, plays a crucial role in virus assembly into filaments and budding. Early in infection, localizes in the nucleus where it inhibits host cell transcription through direct binding to host chromatin. Later in infection, traffics to the cytoplasm through the action of host CRM1 to associate with inclusion bodies, the site of viral transcription and replication. During virus assembly and budding, acts as a bridge between the nucleocapsid and the lipid bilayer. Also plays a role in the inhibition of host interferon-beta response in a RACK1-dependent manner. The sequence is that of Matrix protein (M) from Homo sapiens (Human).